Reading from the N-terminus, the 254-residue chain is uncharacterized protein (254 aa).

It belongs to the methyltransferase superfamily.

This is an uncharacterized protein from Mycobacterium bovis (strain ATCC BAA-935 / AF2122/97).